The following is a 206-amino-acid chain: 2,3-bisphosphoglycerate-dependent phosphoglycerate mutase (206 aa).

Substrate-binding positions include Arg9–Asn16, Thr22–Gly23, Arg61, Glu88–Tyr91, Lys99, Arg115–Arg116, and Gly159–Asn160. The Tele-phosphohistidine intermediate role is filled by His10. The active-site Proton donor/acceptor is Glu88.

The protein belongs to the phosphoglycerate mutase family. BPG-dependent PGAM subfamily. As to quaternary structure, homodimer.

It catalyses the reaction (2R)-2-phosphoglycerate = (2R)-3-phosphoglycerate. The protein operates within carbohydrate degradation; glycolysis; pyruvate from D-glyceraldehyde 3-phosphate: step 3/5. Functionally, catalyzes the interconversion of 2-phosphoglycerate and 3-phosphoglycerate. This chain is 2,3-bisphosphoglycerate-dependent phosphoglycerate mutase, found in Bartonella henselae (strain ATCC 49882 / DSM 28221 / CCUG 30454 / Houston 1) (Rochalimaea henselae).